The chain runs to 204 residues: Large ribosomal subunit protein eL15 (204 aa).

The protein belongs to the eukaryotic ribosomal protein eL15 family. In terms of assembly, component of the large ribosomal subunit.

It localises to the cytoplasm. Functionally, component of the large ribosomal subunit. The ribosome is a large ribonucleoprotein complex responsible for the synthesis of proteins in the cell. The polypeptide is Large ribosomal subunit protein eL15 (rpl15) (Megalobrama amblycephala (Chinese blunt snout bream)).